We begin with the raw amino-acid sequence, 110 residues long: Tyrosine-protein phosphatase 3 (110 aa).

The region spanning 1–110 (QKCATIVMVT…NPPHSGPIVV (110 aa)) is the Tyrosine-protein phosphatase domain. Residue Asp-80 participates in substrate binding.

It belongs to the protein-tyrosine phosphatase family.

The catalysed reaction is O-phospho-L-tyrosyl-[protein] + H2O = L-tyrosyl-[protein] + phosphate. The protein is Tyrosine-protein phosphatase 3 (STY-3) of Styela plicata (Wrinkled sea squirt).